The primary structure comprises 544 residues: Membrane protein insertase YidC (544 aa).

Helical transmembrane passes span 13–33 (LSLF…SNIL), 343–363 (WGLS…PLTF), 409–429 (LGGC…YSLV), 461–481 (LYFV…FTQL), and 506–526 (MPIM…IYWI).

It belongs to the OXA1/ALB3/YidC family. Type 1 subfamily. In terms of assembly, interacts with the Sec translocase complex via SecD. Specifically interacts with transmembrane segments of nascent integral membrane proteins during membrane integration.

The protein resides in the cell inner membrane. Required for the insertion and/or proper folding and/or complex formation of integral membrane proteins into the membrane. Involved in integration of membrane proteins that insert both dependently and independently of the Sec translocase complex, as well as at least some lipoproteins. Aids folding of multispanning membrane proteins. This is Membrane protein insertase YidC from Borreliella burgdorferi (strain ATCC 35210 / DSM 4680 / CIP 102532 / B31) (Borrelia burgdorferi).